The following is a 380-amino-acid chain: DNA-directed RNA polymerase subunit Rpo1C (380 aa).

The protein belongs to the RNA polymerase beta' chain family. In terms of assembly, part of the RNA polymerase complex.

It is found in the cytoplasm. It carries out the reaction RNA(n) + a ribonucleoside 5'-triphosphate = RNA(n+1) + diphosphate. Its function is as follows. DNA-dependent RNA polymerase (RNAP) catalyzes the transcription of DNA into RNA using the four ribonucleoside triphosphates as substrates. Forms part of the jaw domain. The polypeptide is DNA-directed RNA polymerase subunit Rpo1C (Archaeoglobus fulgidus (strain ATCC 49558 / DSM 4304 / JCM 9628 / NBRC 100126 / VC-16)).